Reading from the N-terminus, the 23-residue chain is Clavanin-B (23 aa).

Phe-23 is subject to Phenylalanine amide.

The protein localises to the secreted. Functionally, has antimicrobial activity. The protein is Clavanin-B of Styela clava (Sea squirt).